The chain runs to 545 residues: T-complex protein 1 subunit gamma (545 aa).

At M1 the chain carries N-acetylmethionine. The tract at residues 1 to 24 (MMGHRPVLVLSQNTKRESGRKVQS) is disordered. Residue S11 is modified to Phosphoserine. K15 participates in a covalent cross-link: Glycyl lysine isopeptide (Lys-Gly) (interchain with G-Cter in SUMO2). ADP-binding residues include G42, G94, T95, T96, S97, T162, and K163. 4 residues coordinate ATP: G42, G94, T95, and T96. S170 bears the Phosphoserine mark. K222 bears the N6-acetyllysine mark. A phosphoserine mark is found at S243 and S244. Y247 carries the post-translational modification Phosphotyrosine. Residues K248 and K249 each participate in a glycyl lysine isopeptide (Lys-Gly) (interchain with G-Cter in SUMO2) cross-link. S252 carries the phosphoserine modification. The cysteines at positions 366 and 372 are disulfide-linked. K381 is covalently cross-linked (Glycyl lysine isopeptide (Lys-Gly) (interchain with G-Cter in SUMO2)). G411 contacts ADP. Residue G411 participates in ATP binding. Phosphothreonine occurs at positions 430 and 459. Residues G482, E483, E497, and K502 each coordinate ADP. G482 provides a ligand contact to ATP. E497 contributes to the ATP binding site. The segment at 526–545 (HKKKGDDQSRQGGAPDAGQE) is disordered.

It belongs to the TCP-1 chaperonin family. In terms of assembly, component of the chaperonin-containing T-complex (TRiC), a hexadecamer composed of two identical back-to-back stacked rings enclosing a protein folding chamber. Each ring is made up of eight different subunits: TCP1/CCT1, CCT2, CCT3, CCT4, CCT5, CCT6A/CCT6, CCT7, CCT8. Interacts with PACRG. Interacts with DNAAF4. Interacts with DLEC1.

The protein localises to the cytoplasm. It carries out the reaction ATP + H2O = ADP + phosphate + H(+). In terms of biological role, component of the chaperonin-containing T-complex (TRiC), a molecular chaperone complex that assists the folding of actin, tubulin and other proteins upon ATP hydrolysis. The TRiC complex mediates the folding of WRAP53/TCAB1, thereby regulating telomere maintenance. As part of the TRiC complex may play a role in the assembly of BBSome, a complex involved in ciliogenesis regulating transports vesicles to the cilia. The protein is T-complex protein 1 subunit gamma (CCT3) of Macaca fascicularis (Crab-eating macaque).